The following is a 560-amino-acid chain: Nuclear receptor subfamily 5 group A member 2 (560 aa).

The disordered stretch occupies residues 17-54; sequence GLPAIAPAPGSETPHSPKLEEKHREKRAGLPDRHRRPI. Positions 31–48 are enriched in basic and acidic residues; it reads HSPKLEEKHREKRAGLPD. Positions 104-179 form a DNA-binding region, nuclear receptor; that stretch reads EELCPVCGDK…VGMKLEAVRA (76 aa). Zn(2+) is bound by residues cysteine 107, cysteine 110, cysteine 124, cysteine 127, cysteine 143, cysteine 149, cysteine 159, and cysteine 162. 2 consecutive NR C4-type zinc fingers follow at residues 107–127 and 143–162; these read CPVCGDKVSGYHYGLLTCESC and CIENQNCQIDKTQRKRCPYC. Residues 173 to 188 form a C-terminal extension (CTE) region; the sequence is KLEAVRADRMRGGRNK. The FTZ-F1 box motif lies at 189–208; it reads FGPMYKRDRALKQQKKALIR. Lysine 289 participates in a covalent cross-link: Glycyl lysine isopeptide (Lys-Gly) (interchain with G-Cter in SUMO1). An NR LBD domain is found at 319 to 558; sequence SIPHLILELL…NLLIEMLHAK (240 aa). A phospholipid derivative is bound by residues tyrosine 535 and lysine 539. The segment at 547–558 is AF-2; it reads YNNLLIEMLHAK.

The protein belongs to the nuclear hormone receptor family. NR5 subfamily. As to quaternary structure, monomer; Binds DNA as a monomer. Interacts with nuclear receptor corepressors NR0B1 and NR0B2; repressing NR5A2 nuclear receptor activity. Interacts with nuclear receptor coactivators CTNNB1, PPARGC1A and NCOA2; interaction takes place following ligand-binding and promotes target gene activation. Interacts (when sumoylated) with GPS2; interaction with GPS2 onto hepatic acute phase protein promoters prevents N-Cor corepressor complex dissociation. Interacts with HNF1A. Interacts with GRIP1. Post-translationally, sumoylated by SUMO1 at Lys-289 during the hepatic acute phase response, leading to promote interaction with GPS2 and prevent N-Cor corepressor complex dissociation.

Its subcellular location is the nucleus. The protein localises to the chromosome. In terms of biological role, orphan nuclear receptor that binds DNA as a monomer to the 5'-TCAAGGCCA-3' sequence and controls expression of target genes: regulates key biological processes, such as early embryonic development, cholesterol and bile acid synthesis pathways, as well as liver and pancreas morphogenesis. Ligand-binding causes conformational change which causes recruitment of coactivators, promoting target gene activation. The specific ligand is unknown, but specific phospholipids, such as phosphatidylethanolamine, phosphatidylserine, dilauroyl phosphatidylcholine and diundecanoyl phosphatidylcholine can act as ligand in vitro. Acts as a pioneer transcription factor, which unwraps target DNA from histones and elicits local opening of closed chromatin. Plays a central role during preimplantation stages of embryonic development. Plays a minor role in zygotic genome activation (ZGA) by regulating a small set of two-cell stage genes. Plays a major role in morula development (2-16 cells embryos) by acting as a master regulator at the 8-cell stage, controlling expression of lineage-specifying transcription factors and genes involved in mitosis, telomere maintenance and DNA repair. Zygotic NR5A2 binds to both closed and open chromatin with other transcription factors, often at SINE B1/Alu repeats DNA elements, promoting chromatin accessibility at nearby regulatory regions. Also involved in the epiblast stage of development and embryonic stem cell pluripotency, by promoting expression of POU5F1/OCT4. Regulates other processes later in development, such as formation of connective tissue in lower jaw and middle ear, neural stem cell differentiation, ovarian follicle development and Sertoli cell differentiation. Involved in exocrine pancreas development and acinar cell differentiation. Acts as an essential transcriptional regulator of lipid metabolism. Key regulator of cholesterol 7-alpha-hydroxylase gene (CYP7A) expression in liver. Also acts as a negative regulator of inflammation in different organs, such as, liver and pancreas. Protects against intestinal inflammation via its ability to regulate glucocorticoid production. Plays an anti-inflammatory role during the hepatic acute phase response by acting as a corepressor: inhibits the hepatic acute phase response by preventing dissociation of the N-Cor corepressor complex. Acts as a regulator of immunity by promoting lymphocyte T-cell development, proliferation and effector functions. Also involved in resolution of endoplasmic reticulum stress in the liver. This is Nuclear receptor subfamily 5 group A member 2 from Rattus norvegicus (Rat).